The chain runs to 396 residues: Smad nuclear-interacting protein 1 (396 aa).

A compositionally biased stretch (basic and acidic residues) spans 1-10 (MKAVKSERER). The interval 1–227 (MKAVKSERER…VPAKEKPSFE (227 aa)) is disordered. A Glycyl lysine isopeptide (Lys-Gly) (interchain with G-Cter in SUMO); alternate cross-link involves residue Lys30. Residue Lys30 forms a Glycyl lysine isopeptide (Lys-Gly) (interchain with G-Cter in SUMO1); alternate linkage. A Glycyl lysine isopeptide (Lys-Gly) (interchain with G-Cter in SUMO2); alternate cross-link involves residue Lys30. Phosphoserine is present on residues Ser35, Ser49, Ser52, and Ser54. Phosphothreonine is present on Thr57. Phosphoserine occurs at positions 58 and 99. Positions 77–105 (PPKKKNKASGRRSKSPRSKRNRSPHHSTV) are enriched in basic residues. The segment covering 107–142 (VKQEREDHPRRGREDRQHREPSEQEHRRARNSDRDR) has biased composition (basic and acidic residues). Residue Lys108 forms a Glycyl lysine isopeptide (Lys-Gly) (interchain with G-Cter in SUMO2) linkage. The residue at position 153 (Ser153) is a Phosphoserine. Residues 165–196 (RDRDTQNLQAQEEEREFYNARRREHRQRNDVG) are a coiled coil. At Ser202 the chain carries Phosphoserine. Positions 213–225 (NKEKEVPAKEKPS) are enriched in basic and acidic residues. Residue Lys223 forms a Glycyl lysine isopeptide (Lys-Gly) (interchain with G-Cter in SUMO2) linkage. The FHA domain occupies 281–344 (YLLGRHRRIA…NGTFLNNKRI (64 aa)). Positions 373–382 (SSDTSEIDRK) are enriched in basic and acidic residues. The disordered stretch occupies residues 373 to 396 (SSDTSEIDRKDDEDEEEEEEVSDS). Residues 383–396 (DDEDEEEEEEVSDS) are compositionally biased toward acidic residues. Ser394 carries the post-translational modification Phosphoserine.

As to quaternary structure, component of activated spliceosome complexes. Component of the minor spliceosome, which splices U12-type introns. Binds SMAD4 and CREBBP/EP300. Binds the SMAD1/OAZ1/PSMB4 complex. Interacts with DROSHA and SMARCA4. Component of the SNARP complex which consists at least of SNIP1, SNW1, THRAP3, BCLAF1 and PNN. Post-translationally, degraded by the proteasome upon binding to the SMAD1/OAZ1/PSMB4 complex. As to expression, ubiquitous, with highest expression in heart and skeletal muscle.

Its subcellular location is the nucleus. Its function is as follows. Required for pre-mRNA splicing as component of the spliceosome. As a component of the minor spliceosome, involved in the splicing of U12-type introns in pre-mRNAs. Down-regulates NF-kappa-B signaling by competing with RELA for CREBBP/EP300 binding. Involved in the microRNA (miRNA) biogenesis. May be involved in cyclin-D1/CCND1 mRNA stability through the SNARP complex which associates with both the 3'end of the CCND1 gene and its mRNA. In Homo sapiens (Human), this protein is Smad nuclear-interacting protein 1 (SNIP1).